Reading from the N-terminus, the 147-residue chain is 3-dehydroquinate dehydratase (147 aa).

Y23 serves as the catalytic Proton acceptor. Substrate contacts are provided by N75, H81, and D88. The Proton donor role is filled by H101. Substrate-binding positions include 102 to 103 (LS) and R112.

It belongs to the type-II 3-dehydroquinase family. Homododecamer.

It carries out the reaction 3-dehydroquinate = 3-dehydroshikimate + H2O. It functions in the pathway metabolic intermediate biosynthesis; chorismate biosynthesis; chorismate from D-erythrose 4-phosphate and phosphoenolpyruvate: step 3/7. Functionally, catalyzes a trans-dehydration via an enolate intermediate. This chain is 3-dehydroquinate dehydratase, found in Hahella chejuensis (strain KCTC 2396).